A 273-amino-acid polypeptide reads, in one-letter code: NAD(P)H-hydrate epimerase (273 aa).

Positions A52–L260 constitute a YjeF N-terminal domain. N105 to D109 is a (6S)-NADPHX binding site. K(+) is bound by residues N106 and D170. (6S)-NADPHX is bound by residues G174–E180 and D203. Position 206 (S206) interacts with K(+).

The protein belongs to the NnrE/AIBP family. It depends on K(+) as a cofactor.

It carries out the reaction (6R)-NADHX = (6S)-NADHX. The catalysed reaction is (6R)-NADPHX = (6S)-NADPHX. Its function is as follows. Catalyzes the epimerization of the S- and R-forms of NAD(P)HX, a damaged form of NAD(P)H that is a result of enzymatic or heat-dependent hydration. This is a prerequisite for the S-specific NAD(P)H-hydrate dehydratase to allow the repair of both epimers of NAD(P)HX. This chain is NAD(P)H-hydrate epimerase, found in Branchiostoma floridae (Florida lancelet).